The primary structure comprises 984 residues: Ephrin type-B receptor 1 (984 aa).

The N-terminal stretch at 1-17 is a signal peptide; the sequence is MALDCLLLFLLASAVAA. The Extracellular segment spans residues 18–540; it reads MEETLMDTRT…YKSELREQLP (523 aa). The region spanning 19 to 201 is the Eph LBD domain; it reads EETLMDTRTA…FFKKCPSIVQ (183 aa). Fibronectin type-III domains follow at residues 322–432 and 433–528; these read VPSG…TNQA and APST…TLTD. Asn334, Asn426, and Asn480 each carry an N-linked (GlcNAc...) asparagine glycan. The helical transmembrane segment at 541-563 threads the bilayer; it reads LIAGSAAAGVVFVVSLVAISIVC. The Cytoplasmic portion of the chain corresponds to 564–984; it reads SRKRAYSKEA…QMNQSPSVMA (421 aa). At Tyr600 the chain carries Phosphotyrosine. Positions 619-882 constitute a Protein kinase domain; the sequence is VKIEEVIGAG…EIVNTLDKMI (264 aa). ATP is bound by residues 625–633 and Lys651; that span reads IGAGEFGEV. Asp744 functions as the Proton acceptor in the catalytic mechanism. In terms of domain architecture, SAM spans 911–975; the sequence is TAFTTVDDWL…LSSIHSMRVQ (65 aa). Tyr928 is modified (phosphotyrosine; by autocatalysis). Positions 982–984 match the PDZ-binding motif; the sequence is VMA.

The protein belongs to the protein kinase superfamily. Tyr protein kinase family. Ephrin receptor subfamily. Heterotetramer upon binding of the ligand. The heterotetramer is composed of an ephrin dimer and a receptor dimer. Oligomerization is probably required to induce biological responses. Interacts with EPHB6; transphosphorylates EPHB6 to form an active signaling complex. Interacts with PICK1. Interacts (through Tyr-594) with NCK1 (via SH2 domain); activates the JUN cascade to regulate cell adhesion. The ligand-activated form interacts (through Tyr-928) with GRB7 and GRB10 (via SH2 domains). The ligand-activated form interacts (residues within the catalytic domain) with GRB2 (via SH2 domain). Interacts with GRB2, SHC1 and SRC; activates the MAPK/ERK cascade to regulate cell migration. Interacts with CBL; regulates receptor degradation through ubiquitination. Interacts with ACP1. Phosphorylated. Autophosphorylation is stimulated by the ligand EFNB1. Required for interaction with SH2 domain-containing interactors, for activation of the MAPK/ERK and JUN signaling cascades and for ubiquitination by CBL. In terms of processing, ubiquitinated; (EFNB1)ligand-induced poly- and/or multi-ubiquitination by CBL is regulated by SRC and leads to lysosomal degradation. As to expression, restricted to brain and testes.

The protein resides in the cell membrane. The protein localises to the early endosome membrane. Its subcellular location is the cell projection. It localises to the dendrite. It catalyses the reaction L-tyrosyl-[protein] + ATP = O-phospho-L-tyrosyl-[protein] + ADP + H(+). Functionally, receptor tyrosine kinase which binds promiscuously transmembrane ephrin-B family ligands residing on adjacent cells, leading to contact-dependent bidirectional signaling into neighboring cells. The signaling pathway downstream of the receptor is referred to as forward signaling while the signaling pathway downstream of the ephrin ligand is referred to as reverse signaling. Cognate/functional ephrin ligands for this receptor include EFNB1, EFNB2 and EFNB3. During nervous system development, regulates retinal axon guidance redirecting ipsilaterally ventrotemporal retinal ganglion cells axons at the optic chiasm midline. This probably requires repulsive interaction with EFNB2. In the adult nervous system together with EFNB3, regulates chemotaxis, proliferation and polarity of the hippocampus neural progenitors. In addition to its role in axon guidance also plays an important redundant role with other ephrin-B receptors in development and maturation of dendritic spines and synapse formation. May also regulate angiogenesis. More generally, may play a role in targeted cell migration and adhesion. Upon activation by EFNB1 and probably other ephrin-B ligands activates the MAPK/ERK and the JNK signaling cascades to regulate cell migration and adhesion respectively. Involved in the maintenance of the pool of satellite cells (muscle stem cells) by promoting their self-renewal and reducing their activation and differentiation. The sequence is that of Ephrin type-B receptor 1 (Ephb1) from Rattus norvegicus (Rat).